Here is a 273-residue protein sequence, read N- to C-terminus: Octanoyl-[GcvH]:protein N-octanoyltransferase (273 aa).

The region spanning 40–245 (ATEGAAIRSW…SLMELGATLT (206 aa)) is the BPL/LPL catalytic domain. Residue cysteine 144 is the Acyl-thioester intermediate of the active site.

The protein belongs to the octanoyltransferase LipL family.

It catalyses the reaction N(6)-octanoyl-L-lysyl-[glycine-cleavage complex H protein] + L-lysyl-[lipoyl-carrier protein] = N(6)-octanoyl-L-lysyl-[lipoyl-carrier protein] + L-lysyl-[glycine-cleavage complex H protein]. Its pathway is protein modification; protein lipoylation via endogenous pathway; protein N(6)-(lipoyl)lysine from octanoyl-[acyl-carrier-protein]. Catalyzes the amidotransfer (transamidation) of the octanoyl moiety from octanoyl-GcvH to the lipoyl domain of the E2 subunit of lipoate-dependent enzymes. The chain is Octanoyl-[GcvH]:protein N-octanoyltransferase from Exiguobacterium sibiricum (strain DSM 17290 / CCUG 55495 / CIP 109462 / JCM 13490 / 255-15).